Consider the following 860-residue polypeptide: Endo-1,4-beta-xylanase B (860 aa).

The signal sequence occupies residues 1–20 (MKFSSANKILFSGLVASANA). One can recognise a GH10 domain in the interval 21–324 (YDLLKDYAGD…KPVYNTLLNI (304 aa)). The active-site Proton donor is Glu-144. Glu-255 serves as the catalytic Nucleophile. Cys-278 and Cys-284 are oxidised to a cystine. Residues Asn-295, Asn-309, Asn-359, and Asn-374 are each glycosylated (N-linked (GlcNAc...) asparagine). 2 stretches are compositionally biased toward polar residues: residues 330–362 (RPAS…NKSK) and 371–418 (LPGN…NSKT). Residues 330–793 (RPASSSAKTL…TKTLPGGACK (464 aa)) form a disordered region. Residues 375–382 (KSKTLPGG) form repeat 1. A 47 X 8 AA tandem repeats of [SKN]-S-K-T-L-P-G-G region spans residues 375-782 (KSKTLPGGNS…GGKSKTLPGG (408 aa)). The N-linked (GlcNAc...) asparagine glycan is linked to Asn-390. Repeat unit 2 spans residues 391–398 (KSKTLPGG). The N-linked (GlcNAc...) asparagine glycan is linked to Asn-406. 45 consecutive repeat copies span residues 415–422 (NSKTLPGG), 431–438 (NSKTLPGG), 439–446 (KSKTLPGG), 447–454 (NSKTLPGG), 455–462 (KSKTLPGG), 463–470 (NSKTLPGG), 471–478 (SSKTLPGG), 479–486 (KSKTLPGG), 487–494 (NSKTLPGG), 495–502 (SSKTLPGG), 503–510 (KSKTLPGG), 511–518 (SSKTLPGG), 519–526 (KSKTLPGG), 527–534 (NSKTLPGG), 535–542 (NSKTLPGG), 543–550 (SSKTLPGG), 551–558 (KSKTLPGG), 559–566 (NSKTLPGG), 567–574 (SSKTLPGG), 575–582 (KSKTLPGG), 583–590 (NSKTLPGG), 591–598 (NSKTLPGG), 599–606 (KSKTLPGG), 607–614 (NSKTLPGG), 615–622 (SSKTLPGG), 623–630 (KSKTLPGG), 631–638 (SSKTLPGG), 639–646 (KSKTLPGG), 647–654 (NSKTLPGG), 655–662 (NSKTLPGG), 663–670 (SSKTLPGG), 671–678 (KSKTLPGG), 679–686 (SSKTLPGG), 687–694 (KSKTLPGG), 695–702 (NSKTLPGG), 703–710 (KSKTLPGG), 711–718 (NSKTLPGG), 719–726 (KSKTLPGG), 727–734 (NSKTLPGG), 735–742 (KSKTLPGG), 743–750 (NSKTLPGG), 751–758 (SSKTLPGG), 759–766 (KSKTLPGG), 767–774 (NSKTLPGG), and 775–782 (KSKTLPGG). Polar residues-rich tracts occupy residues 461 to 474 (GGNS…SSKT) and 485 to 498 (GGNS…SSKT). Composition is skewed to polar residues over residues 525–546 (GGNS…SSKT), 557–570 (GGNS…SSKT), 581–594 (GGNS…NSKT), and 605–618 (GGNS…SSKT). A compositionally biased stretch (polar residues) spans 645-666 (GGNSKTLPGGNSKTLPGGSSKT). Over residues 741–754 (GGNSKTLPGGSSKT) the composition is skewed to polar residues. One can recognise a CBM1 domain in the interval 824–860 (NCAAKWGQCGGNGFNGPTCCQNGSRCQFVNEWYSQCL). The N-linked (GlcNAc...) asparagine glycan is linked to Asn-845.

Belongs to the glycosyl hydrolase 10 (cellulase F) family.

The protein resides in the secreted. It catalyses the reaction Endohydrolysis of (1-&gt;4)-beta-D-xylosidic linkages in xylans.. It participates in glycan degradation; xylan degradation. Its function is as follows. Endo-1,4-beta-xylanase involved in the hydrolysis of xylan, a major structural heterogeneous polysaccharide found in plant biomass representing the second most abundant polysaccharide in the biosphere, after cellulose. Hydrolyzes both unsubstituted (oat spelts) and highly substituted (rye and wheat) forms of arabinoxylanslans. The sequence is that of Endo-1,4-beta-xylanase B (xynB) from Neocallimastix patriciarum (Rumen fungus).